Reading from the N-terminus, the 212-residue chain is Large ribosomal subunit protein uL3 (212 aa).

Position 153 is an N5-methylglutamine (Gln153).

Belongs to the universal ribosomal protein uL3 family. As to quaternary structure, part of the 50S ribosomal subunit. Forms a cluster with proteins L14 and L19. Post-translationally, methylated by PrmB.

Functionally, one of the primary rRNA binding proteins, it binds directly near the 3'-end of the 23S rRNA, where it nucleates assembly of the 50S subunit. The polypeptide is Large ribosomal subunit protein uL3 (Marinobacter nauticus (strain ATCC 700491 / DSM 11845 / VT8) (Marinobacter aquaeolei)).